The sequence spans 154 residues: 6,7-dimethyl-8-ribityllumazine synthase (154 aa).

5-amino-6-(D-ribitylamino)uracil contacts are provided by residues phenylalanine 22, 56-58 (AFE), and 80-82 (AVI). Residue 85–86 (AT) participates in (2S)-2-hydroxy-3-oxobutyl phosphate binding. Histidine 88 acts as the Proton donor in catalysis. Phenylalanine 113 is a binding site for 5-amino-6-(D-ribitylamino)uracil. Arginine 127 provides a ligand contact to (2S)-2-hydroxy-3-oxobutyl phosphate.

It belongs to the DMRL synthase family.

It catalyses the reaction (2S)-2-hydroxy-3-oxobutyl phosphate + 5-amino-6-(D-ribitylamino)uracil = 6,7-dimethyl-8-(1-D-ribityl)lumazine + phosphate + 2 H2O + H(+). Its pathway is cofactor biosynthesis; riboflavin biosynthesis; riboflavin from 2-hydroxy-3-oxobutyl phosphate and 5-amino-6-(D-ribitylamino)uracil: step 1/2. Catalyzes the formation of 6,7-dimethyl-8-ribityllumazine by condensation of 5-amino-6-(D-ribitylamino)uracil with 3,4-dihydroxy-2-butanone 4-phosphate. This is the penultimate step in the biosynthesis of riboflavin. This chain is 6,7-dimethyl-8-ribityllumazine synthase, found in Clostridium botulinum (strain ATCC 19397 / Type A).